Consider the following 430-residue polypeptide: GTPase Obg (430 aa).

Positions 1–158 (MFIDTAKVFV…LNIVLELKLL (158 aa)) constitute an Obg domain. Residues 159–331 (ADVGLLGFPN…VMKEAARILK (173 aa)) form the OBG-type G domain. GTP-binding positions include 165–172 (GFPNVGKS), 190–194 (FTTLK), 212–215 (DIPG), 282–285 (NKSD), and 312–314 (SAA). Residues Ser172 and Thr192 each coordinate Mg(2+). The 86-residue stretch at 345–430 (MYIPEEKRFT…LNDFEFEYIL (86 aa)) folds into the OCT domain.

Belongs to the TRAFAC class OBG-HflX-like GTPase superfamily. OBG GTPase family. As to quaternary structure, monomer. Requires Mg(2+) as cofactor.

It is found in the cytoplasm. Its function is as follows. An essential GTPase which binds GTP, GDP and possibly (p)ppGpp with moderate affinity, with high nucleotide exchange rates and a fairly low GTP hydrolysis rate. Plays a role in control of the cell cycle, stress response, ribosome biogenesis and in those bacteria that undergo differentiation, in morphogenesis control. This chain is GTPase Obg, found in Clostridium beijerinckii (strain ATCC 51743 / NCIMB 8052) (Clostridium acetobutylicum).